Reading from the N-terminus, the 4095-residue chain is Protein adenylyltransferase and cysteine protease IbpA (4095 aa).

Residues 1-97 form the signal peptide; that stretch reads MNKNCYKLIF…MVAAPNFAQS (97 aa). 2 binds bovine IgG2 Fc regions span residues 972–1515 and 1116–1255; these read SERI…FVKA and SEVQ…FLKE. Disordered stretches follow at residues 1082-1117, 1130-1154, 1204-1223, 1625-1652, and 1705-1732; these read EVSD…LPSE, KEKA…LQSD, QEAL…AKAK, TVSH…TGFT, and EEDE…QKEE. Residues 1087–1096 show a composition bias toward acidic residues; it reads WERDPDEPDE. Composition is skewed to basic and acidic residues over residues 1097-1117 and 1130-1139; these read PDYK…LPSE and KEKAQQKRQA. A coiled-coil region spans residues 1116–1247; it reads SEVQDKLRQK…AKDHQIEEAL (132 aa). Residues 1716–1727 are compositionally biased toward low complexity; it reads KAKAAPDATDNA. 12 repeat units span residues 2250–2271, 2272–2295, 2296–2317, 2318–2343, 2344–2365, 2366–2387, 2388–2413, 2414–2435, 2436–2457, 2458–2483, 2484–2505, and 2506–2527. The 12 X 22 AA approximate repeats stretch occupies residues 2250–2527; sequence YSTLGDQNAN…RTLGGESDSP (278 aa). Polar residues-rich tracts occupy residues 2592–2611 and 2794–2803; these read SDTE…TRNA and TAPQKTSPVK. Disordered regions lie at residues 2592–2617, 2765–2809, 2825–2894, 2914–2933, 2943–3033, and 3049–3069; these read SDTE…PLPP, TIGE…SAEG, AKGQ…SPKR, LKSK…EPIY, LARA…KSED, and NKSQ…PNYD. Over residues 2880–2889 the composition is skewed to low complexity; it reads PFPSEFSSEP. Composition is skewed to polar residues over residues 2977–2996 and 3005–3018; these read SNLS…QSVA and AESN…QKLQ. Residues 3052–3062 are compositionally biased toward basic and acidic residues; the sequence is QAKEAKSEQET. The Fido 1 domain occupies 3218 to 3355; it reads LTVEMIEKLN…AEVVKEFLTE (138 aa). A yopT-like region spans residues 3222–4095; it reads MIEKLNHGLR…FNVVNYKKNN (874 aa). The tract at residues 3354–3698 is binds bovine IgG2 Fc; it reads TELGKKSSPQ…VDFINRAKNE (345 aa). Disordered stretches follow at residues 3357–3415 and 3432–3454; these read GKKS…PSVP and AELK…ATGV. 2 stretches are compositionally biased toward polar residues: residues 3360–3379 and 3388–3401; these read SSPQ…SPVT and VENT…TIKQ. Positions 3443–3454 are enriched in basic and acidic residues; it reads KAAEKSEGATGV. The tract at residues 3535–3557 is arm region; it reads IPEATVKQMSHLPEFDDILTEGA. One can recognise a Fido 2 domain in the interval 3640 to 3777; that stretch reads LTVQMIENLN…SEVVVEFLKE (138 aa). Residues 3670-3671, 3722-3724, arginine 3728, and glutamine 3757 each bind ATP; these read KE and GNG. A compositionally biased stretch (basic and acidic residues) spans 3783-3798; it reads SKEDNEQNLEKTDRTS. The tract at residues 3783–3829 is disordered; sequence SKEDNEQNLEKTDRTSTDLTESAVENSAALSSGTVRSATVSETVTET. Polar residues predominate over residues 3799 to 3815; sequence TDLTESAVENSAALSSG. Over residues 3816–3829 the composition is skewed to low complexity; sequence TVRSATVSETVTET. Catalysis depends on for cysteine protease activity residues cysteine 3910, histidine 4033, and aspartate 4048.

It in the central section; belongs to the fic family. The protein in the C-terminal section; belongs to the peptidase C58 family. Immunoglobulin-binding protein. In terms of processing, the long form of the protein is probably processed, and/or the transcript may be subject to differential translational initiation.

The protein resides in the secreted. It localises to the cell outer membrane. It carries out the reaction L-tyrosyl-[protein] + ATP = O-(5'-adenylyl)-L-tyrosyl-[protein] + diphosphate. The catalysed reaction is L-threonyl-[protein] + ATP = 3-O-(5'-adenylyl)-L-threonyl-[protein] + diphosphate. Functionally, adenylyltransferase involved in virulence by mediating the addition of adenosine 5'-monophosphate (AMP) to specific tyrosine residue of host Rho GTPases RhoA, Rac and Cdc42. The resulting AMPylation inactivates Rho GTPases, thereby inhibiting actin assembly in infected cells. Probably also acts as a cysteine protease, which may play a central role after invasion of host cell and in virulence. Possible member (with IbpB) of a 2 partner secretion. Probably able to bind bovine epithelial cells (host cells). May participate in the formation of fibrils at the surface of the bacteria. The protein is Protein adenylyltransferase and cysteine protease IbpA (ibpA) of Histophilus somni (strain 2336) (Haemophilus somnus).